Consider the following 169-residue polypeptide: uncharacterized protein (169 aa).

Transmembrane regions (helical) follow at residues 25–45 (ALMGLFEGGFVADLVLWMSYF), 57–77 (FFWVTLSLTQIITSIVAFGVF), and 91–111 (LFLIERIFTLVIGISAYFLMV).

It belongs to the major facilitator superfamily. Allantoate permease family.

The protein localises to the membrane. This is an uncharacterized protein from Saccharomyces cerevisiae (strain ATCC 204508 / S288c) (Baker's yeast).